We begin with the raw amino-acid sequence, 218 residues long: Elongation factor Ts (218 aa).

Residues 82–85 are involved in Mg(2+) ion dislocation from EF-Tu; it reads TDFV.

This sequence belongs to the EF-Ts family.

The protein localises to the cytoplasm. Functionally, associates with the EF-Tu.GDP complex and induces the exchange of GDP to GTP. It remains bound to the aminoacyl-tRNA.EF-Tu.GTP complex up to the GTP hydrolysis stage on the ribosome. This is Elongation factor Ts from Prochlorococcus marinus (strain MIT 9215).